Here is a 690-residue protein sequence, read N- to C-terminus: MAPWPELGDAQPNPDKYLEGAAGQQPTAPDKSKETNKTDNTEAPVTKIELLPSYSTATLIDEPTEVDDPWNLPTLQDSGIKWSERDTKGKILCFFQGIGRLILLLGFLYFFVCSLDILSSAFQLVGGKMAGQFFSNSSIMSNPLLGLVIGVLVTVLVQSSSTSTSIVVSMVSSSLLTVRAAIPIIMGANIGTSITNTIVALMQVGDRSEFRRAFAGATVHDFFNWLSVLVLLPVEVATHYLEIITQLIVESFHFKNGEDAPDLLKVITKPFTKLIVQLDKKVISQIAMNDEKAKNKSLVKIWCKTFTNKTQINVTVPSTANCTSPSLCWTDGIQNWTMKNVTYKENIAKCQHIFVNFHLPDLAVGTILLILSLLVLCGCLIMIVKILGSVLKGQVATVIKKTINTDFPFPFAWLTGYLAILVGAGMTFIVQSSSVFTSALTPLIGIGVITIERAYPLTLGSNIGTTTTAILAALASPGNALRSSLQIALCHFFFNISGILLWYPIPFTRLPIRMAKGLGNISAKYRWFAVFYLIIFFFLIPLTVFGLSLAGWRVLVGVGVPVVFIIILVLCLRLLQSRCPRVLPKKLQNWNFLPLWMRSLKPWDAVVSKFTGCFQMRCCCCCRVCCRACCLLCDCPKCCRCSKCCEDLEEAQEGQDVPVKAPETFDNITISREAQGEVPASDSKTECTAL.

The disordered stretch occupies residues 1–42; the sequence is MAPWPELGDAQPNPDKYLEGAAGQQPTAPDKSKETNKTDNTE. Topologically, residues 1–100 are cytoplasmic; the sequence is MAPWPELGDA…ILCFFQGIGR (100 aa). The segment covering 30–40 has biased composition (basic and acidic residues); it reads DKSKETNKTDN. Residues 101 to 121 form a helical membrane-spanning segment; that stretch reads LILLLGFLYFFVCSLDILSSA. Residues 122-135 are Extracellular-facing; that stretch reads FQLVGGKMAGQFFS. Residues 136 to 156 traverse the membrane as a helical segment; the sequence is NSSIMSNPLLGLVIGVLVTVL. The Cytoplasmic portion of the chain corresponds to 157 to 212; that stretch reads VQSSSTSTSIVVSMVSSSLLTVRAAIPIIMGANIGTSITNTIVALMQVGDRSEFRR. Residues 213 to 233 traverse the membrane as a helical segment; that stretch reads AFAGATVHDFFNWLSVLVLLP. Over 234 to 362 the chain is Extracellular; that stretch reads VEVATHYLEI…IFVNFHLPDL (129 aa). N-linked (GlcNAc...) asparagine glycosylation is found at Asn295, Asn308, Asn313, Asn321, and Asn340. A disulfide bridge connects residues Cys303 and Cys350. Residues 363-383 form a helical membrane-spanning segment; that stretch reads AVGTILLILSLLVLCGCLIMI. Topologically, residues 384 to 407 are cytoplasmic; it reads VKILGSVLKGQVATVIKKTINTDF. A helical transmembrane segment spans residues 408–428; the sequence is PFPFAWLTGYLAILVGAGMTF. Topologically, residues 429–485 are extracellular; the sequence is IVQSSSVFTSALTPLIGIGVITIERAYPLTLGSNIGTTTTAILAALASPGNALRSSL. Residues 486 to 506 traverse the membrane as a helical segment; sequence QIALCHFFFNISGILLWYPIP. The Cytoplasmic segment spans residues 507–525; the sequence is FTRLPIRMAKGLGNISAKY. A helical membrane pass occupies residues 526–546; it reads RWFAVFYLIIFFFLIPLTVFG. Residues 547–552 are Extracellular-facing; that stretch reads LSLAGW. Residues 553-573 form a helical membrane-spanning segment; it reads RVLVGVGVPVVFIIILVLCLR. The Cytoplasmic segment spans residues 574 to 689; the sequence is LLQSRCPRVL…ASDSKTECTA (116 aa).

This sequence belongs to the SLC34A transporter family. Highly expressed in lung. Also detected in pancreas, kidney, small intestine, ovary, testis, prostate and mammary gland. In lung, it is found in alveolar type II cells but not in bronchiolar epithelium.

It localises to the apical cell membrane. The catalysed reaction is 3 Na(+)(out) + phosphate(out) = 3 Na(+)(in) + phosphate(in). Functionally, involved in actively transporting phosphate into cells via Na(+) cotransport. This Homo sapiens (Human) protein is Sodium-dependent phosphate transport protein 2B (SLC34A2).